The following is a 63-amino-acid chain: Large ribosomal subunit protein uL29 (63 aa).

Belongs to the universal ribosomal protein uL29 family.

The polypeptide is Large ribosomal subunit protein uL29 (Hahella chejuensis (strain KCTC 2396)).